The chain runs to 470 residues: Ras-like GTPase HI_1637 (470 aa).

Residues 27 to 34 (GLSRSGKT) carry the Walker A motif motif. The GTP site is built by Ser-29, Gly-32, Lys-33, Thr-34, Ala-35, Trp-98, Ser-101, Thr-102, Arg-103, Lys-342, Asp-344, and His-345. 7 residues coordinate GDP: Gly-32, Lys-33, Thr-34, Ala-35, Trp-98, Ser-101, and Thr-102. 5 residues coordinate GDP: Lys-342, Asp-344, His-345, Ala-383, and Val-384. A GTP-binding site is contributed by Val-384.

This sequence to E.coli YcjX. Monomer in solution. It depends on Mg(2+) as a cofactor.

The catalysed reaction is GTP + H2O = GDP + phosphate + H(+). With respect to regulation, alternates between an inactive form bound to GDP and an active form bound to GTP. Likely activated by a guanine nucleotide-exchange factor (GEF). Binds GTP and GDP. Has intrinsic GTPase activity. Does not hydrolyze ATP. May act as a transducer of stress responses. This Haemophilus influenzae (strain ATCC 51907 / DSM 11121 / KW20 / Rd) protein is Ras-like GTPase HI_1637.